Here is an 87-residue protein sequence, read N- to C-terminus: Large ribosomal subunit protein bL27 (87 aa).

The tract at residues Met1–Arg25 is disordered. The segment covering Ala7–Gln19 has biased composition (polar residues).

It belongs to the bacterial ribosomal protein bL27 family.

This chain is Large ribosomal subunit protein bL27, found in Rhodococcus jostii (strain RHA1).